The primary structure comprises 92 residues: Cell division protein FtsB (92 aa).

The Cytoplasmic portion of the chain corresponds to 1 to 3 (MKV). The helical transmembrane segment at 4–21 (VPILLFVLLAALQYRLWF) threads the bilayer. Residues 22 to 92 (GKNSIPEYVA…TFYRILPSEE (71 aa)) lie on the Periplasmic side of the membrane. Residues 31–74 (AMEKSVAEQAEQNTELLQRNNLLKADIQDLKVGLEAVEERARNE) are a coiled coil.

The protein belongs to the FtsB family. Part of a complex composed of FtsB, FtsL and FtsQ.

It localises to the cell inner membrane. Essential cell division protein. May link together the upstream cell division proteins, which are predominantly cytoplasmic, with the downstream cell division proteins, which are predominantly periplasmic. This is Cell division protein FtsB from Pseudoalteromonas atlantica (strain T6c / ATCC BAA-1087).